Consider the following 176-residue polypeptide: NAD(P)H-quinone oxidoreductase subunit 6, chloroplastic (176 aa).

The next 5 membrane-spanning stretches (helical) occupy residues 10 to 30 (FLLVFLGSGLLVGGLGVVLLP), 32 to 52 (PIFSAFSLGFVLFCISLLYIL), 61 to 81 (AQLLIYVGAINVLIIFAVMFM), 92 to 112 (LWTVGNGITSLVCTTILFSLL), and 152 to 172 (FFLPFELISIILLVALIGAIS).

The protein belongs to the complex I subunit 6 family. As to quaternary structure, NDH is composed of at least 16 different subunits, 5 of which are encoded in the nucleus.

It localises to the plastid. Its subcellular location is the chloroplast thylakoid membrane. It catalyses the reaction a plastoquinone + NADH + (n+1) H(+)(in) = a plastoquinol + NAD(+) + n H(+)(out). The enzyme catalyses a plastoquinone + NADPH + (n+1) H(+)(in) = a plastoquinol + NADP(+) + n H(+)(out). Functionally, NDH shuttles electrons from NAD(P)H:plastoquinone, via FMN and iron-sulfur (Fe-S) centers, to quinones in the photosynthetic chain and possibly in a chloroplast respiratory chain. The immediate electron acceptor for the enzyme in this species is believed to be plastoquinone. Couples the redox reaction to proton translocation, and thus conserves the redox energy in a proton gradient. This Lepidium virginicum (Virginia pepperweed) protein is NAD(P)H-quinone oxidoreductase subunit 6, chloroplastic (ndhG).